A 401-amino-acid chain; its full sequence is Enoyl-[acyl-carrier-protein] reductase [NADH] 1 (401 aa).

Residues 48–53 (GSSSGY), 74–75 (FE), 111–112 (DA), and 139–140 (LA) each bind NAD(+). Tyr225 lines the substrate pocket. The active-site Proton donor is the Tyr235. Residues Lys244 and 273–275 (VVT) each bind NAD(+).

The protein belongs to the TER reductase family. As to quaternary structure, monomer.

The enzyme catalyses a 2,3-saturated acyl-[ACP] + NAD(+) = a (2E)-enoyl-[ACP] + NADH + H(+). It catalyses the reaction a 2,3-saturated acyl-CoA + NAD(+) = a (2E)-enoyl-CoA + NADH + H(+). It carries out the reaction (2E)-butenoyl-[ACP] + NADH + H(+) = butanoyl-[ACP] + NAD(+). The catalysed reaction is butanoyl-CoA + NAD(+) = (2E)-butenoyl-CoA + NADH + H(+). Its pathway is lipid metabolism; fatty acid biosynthesis. With respect to regulation, weakly inhibited by triclosan. Functionally, involved in the final reduction of the elongation cycle of fatty acid synthesis (FAS II). Catalyzes the NADH-dependent reduction of a carbon-carbon double bond in an enoyl moiety that is covalently linked to an acyl carrier protein (ACP). It can use both crotonyl-CoA and crotonyl-ACP. This chain is Enoyl-[acyl-carrier-protein] reductase [NADH] 1, found in Vibrio cholerae serotype O1 (strain ATCC 39315 / El Tor Inaba N16961).